The sequence spans 129 residues: Glycine cleavage system H protein (129 aa).

The Lipoyl-binding domain occupies 24-106; sequence TYTVGITEHA…YAGGWIFKIK (83 aa). Lys-65 is subject to N6-lipoyllysine.

It belongs to the GcvH family. In terms of assembly, the glycine cleavage system is composed of four proteins: P, T, L and H. (R)-lipoate is required as a cofactor.

Functionally, the glycine cleavage system catalyzes the degradation of glycine. The H protein shuttles the methylamine group of glycine from the P protein to the T protein. This Escherichia fergusonii (strain ATCC 35469 / DSM 13698 / CCUG 18766 / IAM 14443 / JCM 21226 / LMG 7866 / NBRC 102419 / NCTC 12128 / CDC 0568-73) protein is Glycine cleavage system H protein.